The primary structure comprises 255 residues: Small ribosomal subunit protein uS2 (255 aa).

Positions 232–255 (ASGRDLGASEEVPVEPALEEASEA) are disordered.

This sequence belongs to the universal ribosomal protein uS2 family.

The protein is Small ribosomal subunit protein uS2 of Rhizobium meliloti (strain 1021) (Ensifer meliloti).